The following is a 139-amino-acid chain: UPF0102 protein Caul_0175 (139 aa).

The protein belongs to the UPF0102 family.

This chain is UPF0102 protein Caul_0175, found in Caulobacter sp. (strain K31).